A 391-amino-acid chain; its full sequence is Superoxide dismutase [Fe] 1, chloroplastic (391 aa).

A chloroplast-targeting transit peptide spans 1-73 (MAFATLVGVG…GESTNSRVLQ (73 aa)). Residues 87-119 (VNDGIDDETASDAEMDEDAEANGDESSGTDEDA) show a composition bias toward acidic residues. The tract at residues 87–120 (VNDGIDDETASDAEMDEDAEANGDESSGTDEDAS) is disordered. 4 residues coordinate Fe cation: H148, H202, D301, and H305. Residues 370-391 (MPQQVNGDAREQTSGQEKSLGV) form a disordered region. A compositionally biased stretch (polar residues) spans 381–391 (QTSGQEKSLGV).

The protein belongs to the iron/manganese superoxide dismutase family. In terms of assembly, homodimer. Requires Fe cation as cofactor.

Its subcellular location is the plastid. It localises to the chloroplast. The catalysed reaction is 2 superoxide + 2 H(+) = H2O2 + O2. In terms of biological role, destroys superoxide anion radicals which are normally produced within the cells and which are toxic to biological systems. This Oryza sativa subsp. japonica (Rice) protein is Superoxide dismutase [Fe] 1, chloroplastic.